A 292-amino-acid chain; its full sequence is Histamine N-methyltransferase (292 aa).

Glu-28 is a binding site for substrate. S-adenosyl-L-methionine contacts are provided by Gly-60, Glu-89, Gln-94, Ser-120, and Ile-142. Substrate is bound at residue Asn-283.

It belongs to the class I-like SAM-binding methyltransferase superfamily. HNMT family. In terms of assembly, monomer.

Its subcellular location is the cytoplasm. It carries out the reaction histamine + S-adenosyl-L-methionine = N(tau)-methylhistamine + S-adenosyl-L-homocysteine + H(+). In terms of biological role, inactivates histamine by N-methylation. Plays an important role in degrading histamine and in regulating the airway response to histamine. The sequence is that of Histamine N-methyltransferase (HNMT) from Homo sapiens (Human).